The following is a 526-amino-acid chain: ESX-1 secretion-associated protein EspB (526 aa).

Positions methionine 1–arginine 23 are enriched in basic and acidic residues. Disordered regions lie at residues methionine 1–glutamate 35, arginine 91–methionine 110, and glutamine 271–glutamine 526. The span at glycine 303–threonine 328 shows a compositional bias: gly residues. A compositionally biased stretch (low complexity) spans proline 335–glycine 362. Over residues serine 363–glutamate 387 the composition is skewed to gly residues. The segment covering aspartate 393–aspartate 405 has biased composition (low complexity). Over residues alanine 413–methionine 429 the composition is skewed to gly residues. Residues proline 430 to alanine 440 show a composition bias toward low complexity. Gly residues predominate over residues arginine 451 to glutamine 484. Positions glycine 485–serine 508 are enriched in basic and acidic residues.

The protein belongs to the EspB family.

Its subcellular location is the secreted. Involved in DNA conjugation, at least in the recipient strain. The polypeptide is ESX-1 secretion-associated protein EspB (Mycolicibacterium smegmatis (strain MKD8) (Mycobacterium smegmatis)).